The primary structure comprises 138 residues: MRTLWIMAVLLVGVEGHLWQFREMIKEATGKEPLTTYLFYACYCGWGGRGEPKDATDRCCFVHDCCYGKLTACSPKLDIYSYSQKNEDIVCGGGTECEKQICECDKAAAICFLDNLGTYNKEYNNYSKSRCIEESPKC.

Positions 1–16 are cleaved as a signal peptide; sequence MRTLWIMAVLLVGVEG. 7 disulfides stabilise this stretch: Cys42–Cys131, Cys44–Cys60, Cys59–Cys111, Cys65–Cys138, Cys66–Cys104, Cys73–Cys97, and Cys91–Cys102. 3 residues coordinate Ca(2+): Tyr43, Gly45, and Gly47. Residue His63 is part of the active site. Asp64 is a Ca(2+) binding site. Asp105 is a catalytic residue.

This sequence belongs to the phospholipase A2 family. Group II subfamily. D49 sub-subfamily. In terms of assembly, monomer. Ca(2+) is required as a cofactor. Expressed by the venom gland.

It is found in the secreted. The enzyme catalyses a 1,2-diacyl-sn-glycero-3-phosphocholine + H2O = a 1-acyl-sn-glycero-3-phosphocholine + a fatty acid + H(+). Snake venom phospholipase A2 (PLA2) that displays edema-inducing activities, exhibits indirect hemolytic activity, and inhibits ADP-induced platelet aggregation. PLA2 catalyzes the calcium-dependent hydrolysis of the 2-acyl groups in 3-sn-phosphoglycerides. The polypeptide is Acidic phospholipase A2 jerdoxin (Protobothrops jerdonii (Jerdon's pitviper)).